A 255-amino-acid polypeptide reads, in one-letter code: D-aminoacyl-tRNA deacylase (255 aa).

Belongs to the DtdA deacylase family. Monomer. Zn(2+) serves as cofactor.

The catalysed reaction is a D-aminoacyl-tRNA + H2O = a tRNA + a D-alpha-amino acid + H(+). It catalyses the reaction glycyl-tRNA(Ala) + H2O = tRNA(Ala) + glycine + H(+). Its function is as follows. D-aminoacyl-tRNA deacylase with broad substrate specificity. By recycling D-aminoacyl-tRNA to D-amino acids and free tRNA molecules, this enzyme counteracts the toxicity associated with the formation of D-aminoacyl-tRNA entities in vivo. This chain is D-aminoacyl-tRNA deacylase, found in Methanocaldococcus jannaschii (strain ATCC 43067 / DSM 2661 / JAL-1 / JCM 10045 / NBRC 100440) (Methanococcus jannaschii).